The chain runs to 486 residues: MTRSNVLPVARTYSRTFSGARLRRLRQERGLTQVALAKALDLSTSYVNQLENDQRPITVPVLLLLTERFDLSAQYFSSDSDARLVADLSDVFTDIGVEHAVSGAQIEEFVARMPEVGHSLVAVHRRLRAATEELEGYRSRATAETELPPARPMPFEEVRDFFYDRNNYIHDLDMAAERMFTESGMRTGGLDIQLAELMRDRFGISVVIDDNLPDTAKRRYHPDTKVLRVAHWLMPGQRAFQIATQLALVGQSDLISSIVATDDQLSTEARGVARIGLANYFAGAFLLPYREFHRAAEQLRYDIDLLGRRFGVGFETVCHRLSTLQRPRQRGIPFIFVRTDKAGNISKRQSATAFHFSRVGGSCPLWVVHDAFAQPERIVRQVAQMPDGRSYFWVAKTTAADGLGYLGPHKNFAVGLGCDLAHAHKLVYSTGVVLDDPSTEVPIGAGCKICNRTSCAQRAFPYLGGRVAVDENAGSSLPYSSTEQSV.

One can recognise an HTH cro/C1-type domain in the interval 22 to 76 (LRRLRQERGLTQVALAKALDLSTSYVNQLENDQRPITVPVLLLLTERFDLSAQYF). Residues 33–52 (QVALAKALDLSTSYVNQLEN) constitute a DNA-binding region (H-T-H motif).

The protein belongs to the short-chain fatty acyl-CoA assimilation regulator (ScfR) family.

It functions in the pathway organic acid metabolism; propanoate degradation. Its pathway is steroid metabolism; cholesterol metabolism. Plays a key role in regulating expression of enzymes involved in the catabolism of short chain fatty acids (SCFA) via both the glyoxylate (acetyl degradation route) and the methylcitrate cycle (propionate degradation route). Required for intracellular growth in macrophages and for the assimilation of cholesterol-derived propionate. PrpR acts as a transcriptional activator of prpDC and icl genes when propionate is the main carbon source, and as a ramB repressor. During growth on propionate, PrpR also acts as a transcriptional repressor of dnaA, which encodes the DnaA initiator protein responsible for initiating chromosomal replication. It is possibly involved in the regulation of genes responsible for controlling cholesterol utilization. This chain is HTH-type transcriptional regulator PrpR, found in Mycobacterium tuberculosis (strain ATCC 25618 / H37Rv).